Reading from the N-terminus, the 478-residue chain is Glycogen synthase (478 aa).

An ADP-alpha-D-glucose-binding site is contributed by lysine 16.

It belongs to the glycosyltransferase 1 family. Bacterial/plant glycogen synthase subfamily.

The enzyme catalyses [(1-&gt;4)-alpha-D-glucosyl](n) + ADP-alpha-D-glucose = [(1-&gt;4)-alpha-D-glucosyl](n+1) + ADP + H(+). Its pathway is glycan biosynthesis; glycogen biosynthesis. Synthesizes alpha-1,4-glucan chains using ADP-glucose. This Lachnoclostridium phytofermentans (strain ATCC 700394 / DSM 18823 / ISDg) (Clostridium phytofermentans) protein is Glycogen synthase.